A 607-amino-acid polypeptide reads, in one-letter code: MARVKQKGKAGAARIYITRNQALKKLQLTLADFRRICILKGVYPREPKNKKKANKGSTAPVTFYYTKDIQYLLHEPIVQKFREYKVFARKLSKALGKGELETAKRLEARKPTYSLDHIIKERYPTFHDALKDIDDALSMLFLFSTMPVTDKIGAATVANCERLCAEFQHYVIRSNSLRKAFLSIKGIYYQAEIFGEQITWIVPYKFAQSVPTDVDFRIMHTFLEFYQALMGFVNFKLYNTLGLRYPPKIDVAKSESAAGLAAYELEESSSLPAIVHGNNKNARKNIATLKSKIRDIVNSDANVVEQSEKTTEDADEEPETEENLDEFKPADGADNEDSKSLVSHISSSNTSLFSNFTFFLSREVPRFSLEFVIRAFGGKVGWDPILGSGSPFSESDPVITHHICDRPHISQKYEGRIYIQPQWVYDSINKGILERTDLYACGATLPPHLSPFVKVGENDYDPEAELSAEENDDVSEALDDNISGEAVPISKKNDEPENVEQIDDAEEEDLEHQRELEAEAGGVAYSEYVKQNSKSAKKTKKRQRDTLTAEEKEEKEAKELSKMMMSNKQRKLYSKLKNENSKNENYNNALRNRKRDIEKRKKLKVEN.

Residues 301–341 (ANVVEQSEKTTEDADEEPETEENLDEFKPADGADNEDSKSL) are disordered. Residues 313–324 (DADEEPETEENL) are compositionally biased toward acidic residues. The span at 325-339 (DEFKPADGADNEDSK) shows a compositional bias: basic and acidic residues. Residues 348-441 (SNTSLFSNFT…ILERTDLYAC (94 aa)) form the BRCT domain. Positions 497 to 604 (ENVEQIDDAE…RDIEKRKKLK (108 aa)) form a coiled coil. Positions 531–607 (QNSKSAKKTK…EKRKKLKVEN (77 aa)) are disordered. Basic and acidic residues-rich tracts occupy residues 544–561 (RDTL…KELS) and 595–607 (RDIE…KVEN).

It belongs to the pescadillo family. Component of the NOP7 complex, composed of erb1/SPBC4F6.13c, ppp1/SPBC19F5.05c and ytm1/SPAC890.04c. Within the NOP7 complex erb1/SPBC4F6.13c appears to interact directly with ppp1/SPBC19F5.05c and ytm1/SPAC890.04c. The NOP7 complex also associates with the 66S pre-ribosome.

It is found in the nucleus. The protein resides in the nucleoplasm. It localises to the nucleolus. Its function is as follows. Component of the NOP7 complex, which is required for maturation of the 25S and 5.8S ribosomal RNAs and formation of the 60S ribosome. The sequence is that of Pescadillo homolog (ppp1) from Schizosaccharomyces pombe (strain 972 / ATCC 24843) (Fission yeast).